Reading from the N-terminus, the 121-residue chain is Surface glycoprotein CD59 homolog (121 aa).

Positions 1–19 (MYILFTLVLTFVFCKPIHS) are cleaved as a signal peptide. Residues 20–104 (LQCYNCSHST…ENIKRTISDK (85 aa)) enclose the UPAR/Ly6 domain. 5 disulfides stabilise this stretch: C22–C45, C25–C32, C38–C58, C64–C82, and C83–C88. N24 is a glycosylation site (N-linked (GlcNAc...) asparagine; by host). N96 is lipidated: GPI-anchor amidated asparagine; by host. A propeptide spans 97–121 (IKRTISDKALLLLALFLVTAWNFPL) (removed in mature form).

The protein localises to the host cell membrane. This Saimiriine herpesvirus 2 (strain 11) (SaHV-2) protein is Surface glycoprotein CD59 homolog (15).